A 312-amino-acid polypeptide reads, in one-letter code: Olfactory receptor 13J1 (312 aa).

The Extracellular segment spans residues 1-25 (MEPLNRTEVSEFFLKGFSGYPALEH). The N-linked (GlcNAc...) asparagine glycan is linked to Asn5. Residues 26 to 46 (LLFPLCSAMYLVTLLGNTAIM) traverse the membrane as a helical segment. Residues 47 to 54 (AVSVLDIH) are Cytoplasmic-facing. The chain crosses the membrane as a helical span at residues 55 to 75 (LHTPVYFFLGNLSTLDICYTP). The Extracellular portion of the chain corresponds to 76–99 (TFVPLMLVHLLSSRKTISFAVCAI). The cysteines at positions 97 and 189 are disulfide-linked. Residues 100–120 (QMCLSLSTGSTECLLLAITAY) form a helical membrane-spanning segment. The Cytoplasmic portion of the chain corresponds to 121-139 (DRYLAICQPLRYHVLMSHR). Residues 140 to 160 (LCVLLMGAAWVLCLLKSVTEM) traverse the membrane as a helical segment. At 161–197 (VISMRLPFCGHHVVSHFTCKILAVLKLACGNTSVSED) the chain is on the extracellular side. N-linked (GlcNAc...) asparagine glycosylation is present at Asn191. Residues 198 to 217 (FLLAGSILLLPVPLAFICLS) form a helical membrane-spanning segment. Residues 218–237 (YLLILATILRVPSAARCCKA) lie on the Cytoplasmic side of the membrane. A helical membrane pass occupies residues 238–258 (FSTCLAHLAVVLLFYGTIIFM). Residues 259–271 (YLKPKSKEAHISD) are Extracellular-facing. The helical transmembrane segment at 272–292 (EVFTVLYAMVTTMLNPTIYSL) threads the bilayer. Topologically, residues 293 to 312 (RNKEVKEAARKVWGRSRASR) are cytoplasmic.

The protein belongs to the G-protein coupled receptor 1 family.

It is found in the cell membrane. Its function is as follows. Odorant receptor. This Homo sapiens (Human) protein is Olfactory receptor 13J1 (OR13J1).